The sequence spans 352 residues: Nuclear receptor subfamily 1 group I member 3 (352 aa).

Residues 8–83 constitute a DNA-binding region (nuclear receptor); sequence LRNCVVCGDQ…AGMRKDMILS (76 aa). The NR C4-type zinc finger occupies 11–31; the sequence is CVVCGDQATGYHFNALTCEGC. Thr38 carries the phosphothreonine; by PKC modification. The segment at 47–71 adopts an NR C4-type zinc-finger fold; sequence CPFAGSCEVSKIQRRHCPACRLQKC. The NR LBD domain maps to 109 to 352; sequence EQEELIQTLL…MMPLLQEICS (244 aa).

Belongs to the nuclear hormone receptor family. NR1 subfamily. As to quaternary structure, heterodimer of NR1I3 and RXR. Interacts with PSMC4. Interacts with ECT2. Directly interacts with DNAJC7; this complex may also include HSP90. Interacts with CRY1. Interacts with CRY2 in a ligand-dependent manner. Post-translationally, phosphorylated at Thr-38 by PKC, dephosphorylation of Thr-38 is required for nuclear translocation and activation.

The protein resides in the nucleus. The protein localises to the cytoplasm. Its subcellular location is the cytoskeleton. Functionally, binds and transactivates the retinoic acid response elements that control expression of the retinoic acid receptor beta 2 and alcohol dehydrogenase 3 genes. Transactivates both the phenobarbital responsive element module of the human CYP2B6 gene and the CYP3A4 xenobiotic response element. The protein is Nuclear receptor subfamily 1 group I member 3 (NR1I3) of Macaca mulatta (Rhesus macaque).